Reading from the N-terminus, the 483-residue chain is MILFLCLIILFIITILFFKKHKTVNKIINFPSPPRLPLIGNLHQLSQHPHRSLCYLSHRYGPLMLLHFGSVPVIVASTAEAARDVLKTHDRVFASRPRSKIFEKLLYKSRNMASAPYGEYWRQMKSVSVLHLLSNKMVRSFQDVRQEEITLMMETIRKSSSKPVNLSKILSSLTNDVICRVALGRKYGVGTDFKELIDRLMRQLGTFTIGSYVPWLAWTDWVSGLEARLEKTANDFDKLLERIVQDHEDGDGDKTDFVDVLLAAQRDKSFGFDIDRLSIKAIVLDAFVGGTDTSSTLVEWEMTELLRHPTCLKKLQEEVRTICKGKSSVSEDDIQGMEYLKAVVKEALRLHPPVPLMVPHQSTQDVRLRDNHIPAGTQVIVNLWAVGREAATWGPDANEFRPERHLESPSDFRGQDFELIPFGAGRRMCPGISFAVVLNEVVLANLVHGFDWQSIDDETDVAESIGSVIRRMHPLYVIPSSTT.

The chain crosses the membrane as a helical span at residues 1 to 21; sequence MILFLCLIILFIITILFFKKH. A heme-binding site is contributed by Cys-429.

Belongs to the cytochrome P450 family. Heme serves as cofactor.

The protein localises to the membrane. The sequence is that of Cytochrome P450 71A23 (CYP71A23) from Arabidopsis thaliana (Mouse-ear cress).